The primary structure comprises 87 residues: Translation initiation factor IF-1 1 (87 aa).

The region spanning 1–72 (MAKEELLELD…TKGRINFRHK (72 aa)) is the S1-like domain. The disordered stretch occupies residues 68–87 (NFRHKDANSPRPPRTGQPRR). Over residues 77-87 (PRPPRTGQPRR) the composition is skewed to pro residues.

It belongs to the IF-1 family. Component of the 30S ribosomal translation pre-initiation complex which assembles on the 30S ribosome in the order IF-2 and IF-3, IF-1 and N-formylmethionyl-tRNA(fMet); mRNA recruitment can occur at any time during PIC assembly.

The protein localises to the cytoplasm. Functionally, one of the essential components for the initiation of protein synthesis. Stabilizes the binding of IF-2 and IF-3 on the 30S subunit to which N-formylmethionyl-tRNA(fMet) subsequently binds. Helps modulate mRNA selection, yielding the 30S pre-initiation complex (PIC). Upon addition of the 50S ribosomal subunit IF-1, IF-2 and IF-3 are released leaving the mature 70S translation initiation complex. This Burkholderia lata (strain ATCC 17760 / DSM 23089 / LMG 22485 / NCIMB 9086 / R18194 / 383) protein is Translation initiation factor IF-1 1.